The primary structure comprises 283 residues: Peroxisomal protein 2 (283 aa).

The Peroxisomal target signal 1 (PTS1) motif lies at 281–283 (VKL).

This sequence belongs to the PXP2 family.

Its subcellular location is the peroxisome matrix. It localises to the cytoplasm. It is found in the cytosol. Its function is as follows. Probably involved in peroxisome formation or maintenance as well as in amino acid metabolism. In Saccharomyces cerevisiae (strain ATCC 204508 / S288c) (Baker's yeast), this protein is Peroxisomal protein 2.